The sequence spans 613 residues: GPI mannosyltransferase 3 (613 aa).

N-linked (GlcNAc...) asparagine glycosylation is present at asparagine 19. Transmembrane regions (helical) follow at residues 22–42, 83–103, 106–126, 132–152, 168–188, 216–236, 252–272, 280–300, 309–329, 342–362, 369–389, and 411–431; these read FFLR…ATFF, LFAG…PVGI, ATIL…LGDW, AVSI…LQIF, LEMT…LGVA, LAVV…LFTI, VVTL…ISAA, FWTF…LAVF, YFLQ…VASL, FNVL…LSLI, FIYP…ASFF, and YLFV…FFHQ.

Belongs to the glycosyltransferase 22 family. PIGB subfamily.

The protein localises to the endoplasmic reticulum membrane. Its pathway is glycolipid biosynthesis; glycosylphosphatidylinositol-anchor biosynthesis. In terms of biological role, mannosyltransferase involved in glycosylphosphatidylinositol-anchor biosynthesis. Transfers the third mannose to Man2-GlcN-acyl-PI during GPI precursor assembly. The sequence is that of GPI mannosyltransferase 3 (GPI10) from Gibberella zeae (strain ATCC MYA-4620 / CBS 123657 / FGSC 9075 / NRRL 31084 / PH-1) (Wheat head blight fungus).